The primary structure comprises 341 residues: Glycerol-3-phosphate dehydrogenase [NAD(P)+] (341 aa).

NADPH contacts are provided by S15, W16, R36, and K110. Positions 110, 139, and 141 each coordinate sn-glycerol 3-phosphate. A143 serves as a coordination point for NADPH. Residues K194, D247, S257, R258, and N259 each coordinate sn-glycerol 3-phosphate. K194 functions as the Proton acceptor in the catalytic mechanism. R258 lines the NADPH pocket. NADPH contacts are provided by V282 and E284.

Belongs to the NAD-dependent glycerol-3-phosphate dehydrogenase family.

The protein resides in the cytoplasm. The enzyme catalyses sn-glycerol 3-phosphate + NAD(+) = dihydroxyacetone phosphate + NADH + H(+). It catalyses the reaction sn-glycerol 3-phosphate + NADP(+) = dihydroxyacetone phosphate + NADPH + H(+). It functions in the pathway membrane lipid metabolism; glycerophospholipid metabolism. Its function is as follows. Catalyzes the reduction of the glycolytic intermediate dihydroxyacetone phosphate (DHAP) to sn-glycerol 3-phosphate (G3P), the key precursor for phospholipid synthesis. The polypeptide is Glycerol-3-phosphate dehydrogenase [NAD(P)+] (Stenotrophomonas maltophilia (strain K279a)).